Consider the following 107-residue polypeptide: Flagellar transcriptional regulator FlhD (107 aa).

Belongs to the FlhD family. As to quaternary structure, homodimer; disulfide-linked. Forms a heterohexamer composed of two FlhC and four FlhD subunits. Each FlhC binds a FlhD dimer, forming a heterotrimer, and a hexamer assembles by dimerization of two heterotrimers.

The protein resides in the cytoplasm. Functions in complex with FlhC as a master transcriptional regulator that regulates transcription of several flagellar and non-flagellar operons by binding to their promoter region. Activates expression of class 2 flagellar genes, including fliA, which is a flagellum-specific sigma factor that turns on the class 3 genes. Also regulates genes whose products function in a variety of physiological pathways. This chain is Flagellar transcriptional regulator FlhD, found in Bordetella avium (strain 197N).